The chain runs to 68 residues: MREGIHPDYYQAKVVCNCGNEFVTGSTKEEIHVEICSKCHPFYTGQQKASSTRGRIDKFNKKYGVSNN.

C16, C18, C36, and C39 together coordinate Zn(2+).

This sequence belongs to the bacterial ribosomal protein bL31 family. Type A subfamily. In terms of assembly, part of the 50S ribosomal subunit. Zn(2+) is required as a cofactor.

Its function is as follows. Binds the 23S rRNA. This is Large ribosomal subunit protein bL31 from Lachnospira eligens (strain ATCC 27750 / DSM 3376 / VPI C15-48 / C15-B4) (Eubacterium eligens).